The sequence spans 611 residues: Probable Xaa-Pro aminopeptidase P (611 aa).

The Mn(2+) site is built by Asp408, Asp419, Glu517, and Glu531.

The protein belongs to the peptidase M24B family. Requires Mn(2+) as cofactor.

It carries out the reaction Release of any N-terminal amino acid, including proline, that is linked to proline, even from a dipeptide or tripeptide.. Its function is as follows. Catalyzes the removal of a penultimate prolyl residue from the N-termini of peptides. The polypeptide is Probable Xaa-Pro aminopeptidase P (AMPP) (Coccidioides posadasii (strain RMSCC 757 / Silveira) (Valley fever fungus)).